A 259-amino-acid chain; its full sequence is V-type proton ATPase subunit D (259 aa).

The tract at residues lysine 214–asparagine 259 is disordered.

Belongs to the V-ATPase D subunit family. V-ATPase is a heteromultimeric enzyme made up of two complexes: the ATP-hydrolytic V1 complex and the proton translocation V0 complex. The V1 complex consists of three catalytic AB heterodimers that form a heterohexamer, three peripheral stalks each consisting of EG heterodimers, one central rotor including subunits D and F, and the regulatory subunits C and H. The proton translocation complex V0 consists of the proton transport subunit a, a ring of proteolipid subunits c9c'', rotary subunit d, and The proton translocation complex V0 consists of the proton transport subunit a, a ring of proteolipid subunits c9c'', rotary subunit d, subunits e and f, and the accessory subunits vah-19/Ac45 and vah-20/PRR.

Functionally, subunit of the V1 complex of vacuolar(H+)-ATPase (V-ATPase), a multisubunit enzyme composed of a peripheral complex (V1) that hydrolyzes ATP and a membrane integral complex (V0) that translocates protons. V-ATPase is responsible for acidifying and maintaining the pH of intracellular compartments and in some cell types, is targeted to the plasma membrane, where it is responsible for acidifying the extracellular environment. The chain is V-type proton ATPase subunit D from Caenorhabditis briggsae.